Reading from the N-terminus, the 227-residue chain is MKLWAILAVCILLLSSVSSIPLPSNWLAGKKRSHLPDPQEGEDQVFGMDGAVPEDPTANMAPQDQQTYTEIPDDYPDQFDDVLEFIQDTIKRLKRSSNKQPPSRRDRGRQSLAANTQISSKKTVKDRKRKNKGCVLREIHLNVTDLGLGYETKEELKFRYCSGSCNNPETTYDQILKNLTIRKKLVNDKVKQACCRPIAFDDDLSFLDDNLVYHTLKQHSAKKCGCI.

Positions 1–19 (MKLWAILAVCILLLSSVSS) are cleaved as a signal peptide. The propeptide occupies 20–93 (IPLPSNWLAG…EFIQDTIKRL (74 aa)). Disordered stretches follow at residues 32-61 (RSHL…ANMA) and 93-113 (LKRS…QSLA). Intrachain disulfides connect Cys-134–Cys-195, Cys-161–Cys-224, and Cys-165–Cys-226. 2 N-linked (GlcNAc...) asparagine glycosylation sites follow: Asn-142 and Asn-178.

It belongs to the TGF-beta family. GDNF subfamily. Homodimer; disulfide-linked. Interacts with GFRA1 coreceptor and RET: forms a 2:2:2 ternary complex composed of GDNF ligand, GFRA1 and RET receptor. In terms of tissue distribution, from stage 22, expressed in somites and the pronephros. At stage 24 and 26, expressed in the pharyngeal arches I-III. At stage 31, expression in the eye, central nervous system and pharyngeal arches IV and V increases. Up to stage 34, expression becomes intense at the oral cavity and lateral line structures. At this stage, expression weakens in the pharyngeal arches, and increases in the epibranchial arches. Expressed in the digestive tract in stage 34 embryos.

Its subcellular location is the secreted. In terms of biological role, neurotrophic factor that enhances survival and morphological differentiation of dopaminergic neurons and increases their high-affinity dopamine uptake. Acts by binding to its coreceptor, GFRA1, leading to autophosphorylation and activation of the RET receptor. This Xenopus laevis (African clawed frog) protein is Glial cell line-derived neurotrophic factor.